The primary structure comprises 472 residues: WASH complex subunit 1 (472 aa).

A required for WASH complex assembly region spans residues 1-51 (MPQNRSVESQAYSLPLILPDLRREEAIHQITDTLQHLQTVSNDIFSRILQR). Disordered regions lie at residues 294–411 (DRQD…GGDL) and 429–472 (KVPA…DWES). Pro residues predominate over residues 301 to 334 (LPPPPPPPPPPPPPPPPEPSALSPPAPPPPPLSI). The tract at residues 352 to 472 (QGAPKEVVNP…GDGDEDDWES (121 aa)) is VCA. Positions 364–386 (GRASLLESIRQAGGIGKANLRNV) constitute a WH2 domain. A compositionally biased stretch (basic and acidic residues) spans 385–400 (NVKEKKLEKKKMKEQE).

It belongs to the WASH1 family. Component of the WASH complex.

It is found in the early endosome membrane. It localises to the recycling endosome membrane. Functionally, acts as a nucleation-promoting factor at the surface of endosomes, where it recruits and activates the Arp2/3 complex to induce actin polymerization, playing a key role in the fission of tubules that serve as transport intermediates during endosome sorting. This is WASH complex subunit 1 from Xenopus laevis (African clawed frog).